Reading from the N-terminus, the 445-residue chain is Na(+)-translocating NADH-quinone reductase subunit A (445 aa).

Belongs to the NqrA family. As to quaternary structure, composed of six subunits; NqrA, NqrB, NqrC, NqrD, NqrE and NqrF.

The catalysed reaction is a ubiquinone + n Na(+)(in) + NADH + H(+) = a ubiquinol + n Na(+)(out) + NAD(+). Its function is as follows. NQR complex catalyzes the reduction of ubiquinone-1 to ubiquinol by two successive reactions, coupled with the transport of Na(+) ions from the cytoplasm to the periplasm. NqrA to NqrE are probably involved in the second step, the conversion of ubisemiquinone to ubiquinol. The chain is Na(+)-translocating NADH-quinone reductase subunit A from Pseudomonas aeruginosa (strain ATCC 15692 / DSM 22644 / CIP 104116 / JCM 14847 / LMG 12228 / 1C / PRS 101 / PAO1).